The chain runs to 716 residues: Mitochondrial Rho GTPase 1 (716 aa).

The Cytoplasmic segment spans residues 1 to 692; it reads MSPDAIRVVV…VSVDQDDIKH (692 aa). A Miro 1 domain is found at 3–224; the sequence is PDAIRVVVCG…FYLCQRAVTH (222 aa). A disordered region spans residues 58–99; sequence NDQDHHHHHQSSPSTMKNKRKHNNKRERERERESSINNVQPN. GTP contacts are provided by residues 84 to 91, 113 to 115, and 167 to 170; these read ERERERES, DTS, and NKSD. One can recognise an EF-hand 1 domain in the interval 240-275; sequence GAIKPLKRIFWLSDTDQDGYLNFEELSELHKKCFGI. Ca(2+) contacts are provided by Asp-253, Asp-255, Asp-257, Tyr-259, and Glu-264. The segment at 303–327 is disordered; the sequence is TQTPPQQQHLATSAGTPNGTTTTTS. One can recognise an EF-hand 2 domain in the interval 388-423; it reads TGYKFFVDLFIKFDKDNDGGLNEDELNTLFRSTPGI. Residues Asp-401, Asp-403, Asp-405, and Glu-412 each coordinate Ca(2+). Residues 505–671 enclose the Miro 2 domain; sequence RNVFNCFIVG…FIQLVDAAKT (167 aa). Residues 514 to 521, 550 to 554, and 620 to 623 contribute to the GTP site; these read GAPKAGKS, ELRGG, and LKAD. A helical; Anchor for type IV membrane protein membrane pass occupies residues 693–713; the sequence is IIMTGAAIAVVGLVSIWVLNS. Over 714 to 716 the chain is Mitochondrial intermembrane; it reads LRR.

This sequence belongs to the mitochondrial Rho GTPase family.

The protein resides in the mitochondrion outer membrane. Its function is as follows. Mitochondrial GTPase involved in mitochondrial trafficking. Probably involved in control of anterograde transport of mitochondria and their subcellular distribution. The chain is Mitochondrial Rho GTPase 1 (GEM1) from Candida albicans (strain SC5314 / ATCC MYA-2876) (Yeast).